The primary structure comprises 1461 residues: Autotransporter adhesin SadA (1461 aa).

An N-terminal signal peptide occupies residues methionine 1 to alanine 54. A surface exposed passenger domain region spans residues asparagine 55–lysine 1372. The translocator domain stretch occupies residues methionine 1373–tryptophan 1461. Transmembrane regions (beta stranded) follow at residues glycine 1407–threonine 1417, glutamate 1421–valine 1431, lysine 1440–asparagine 1446, and aspartate 1450–tryptophan 1461.

Belongs to the autotransporter-2 (AT-2) (TC 1.B.40) family. In terms of assembly, homotrimer.

The protein resides in the cell surface. Its subcellular location is the cell outer membrane. Its function is as follows. Involved in cell aggregation, biofilm formation, and adhesion to human intestinal epithelial cells. The protein is Autotransporter adhesin SadA of Salmonella typhimurium (strain LT2 / SGSC1412 / ATCC 700720).